The chain runs to 178 residues: MAELITIARPYAEAAFEVAKEEGKLVEWSEQLANLSAIVSDETMTAYMVNPSVTSEDVLKLLVDVMDSNLNSEVKNLLNVMAENKRLDALSEVAEVFEELKATEDKRVRATVISARKATVEQKKKLSAALNAKFDAEVEITYEEDPSLISGIKIKVGDWAIDGSALSQLNKLGAAIAQ.

This sequence belongs to the ATPase delta chain family. F-type ATPases have 2 components, F(1) - the catalytic core - and F(0) - the membrane proton channel. F(1) has five subunits: alpha(3), beta(3), gamma(1), delta(1), epsilon(1). F(0) has three main subunits: a(1), b(2) and c(10-14). The alpha and beta chains form an alternating ring which encloses part of the gamma chain. F(1) is attached to F(0) by a central stalk formed by the gamma and epsilon chains, while a peripheral stalk is formed by the delta and b chains.

It localises to the cell inner membrane. Functionally, f(1)F(0) ATP synthase produces ATP from ADP in the presence of a proton or sodium gradient. F-type ATPases consist of two structural domains, F(1) containing the extramembraneous catalytic core and F(0) containing the membrane proton channel, linked together by a central stalk and a peripheral stalk. During catalysis, ATP synthesis in the catalytic domain of F(1) is coupled via a rotary mechanism of the central stalk subunits to proton translocation. This protein is part of the stalk that links CF(0) to CF(1). It either transmits conformational changes from CF(0) to CF(1) or is implicated in proton conduction. This is ATP synthase subunit delta from Hydrogenovibrio crunogenus (strain DSM 25203 / XCL-2) (Thiomicrospira crunogena).